The following is a 225-amino-acid chain: GTP-binding nuclear protein Ran (225 aa).

Residues 8–172 (VVAEFKLVLV…LWILRKLTGD (165 aa)) enclose the Small GTPase Ran-type domain. A GTP-binding site is contributed by 19 to 26 (DGGVGKTT). Residues 38–46 (KRYIATQGV) are switch-I. GTP is bound by residues G69, 123–126 (NKVD), and 151–153 (SAK). The tract at residues 69–85 (GQEKLGGLREGYYIGAN) is switch-II.

It belongs to the small GTPase superfamily. Ran family. Monomer. Found in a nuclear export complex with RanGTP, exportin and pre-miRNA.

It localises to the nucleus. In terms of biological role, GTP-binding protein involved in nucleocytoplasmic transport. Required for the import of protein into the nucleus and also for RNA export. Involved in chromatin condensation and control of cell cycle. The chain is GTP-binding nuclear protein Ran from Tetrahymena thermophila.